Consider the following 309-residue polypeptide: Porphobilinogen deaminase (309 aa).

C242 is subject to S-(dipyrrolylmethanemethyl)cysteine.

It belongs to the HMBS family. As to quaternary structure, monomer. Dipyrromethane is required as a cofactor.

It catalyses the reaction 4 porphobilinogen + H2O = hydroxymethylbilane + 4 NH4(+). It participates in porphyrin-containing compound metabolism; protoporphyrin-IX biosynthesis; coproporphyrinogen-III from 5-aminolevulinate: step 2/4. In terms of biological role, tetrapolymerization of the monopyrrole PBG into the hydroxymethylbilane pre-uroporphyrinogen in several discrete steps. This is Porphobilinogen deaminase from Shewanella woodyi (strain ATCC 51908 / MS32).